The sequence spans 291 residues: Filament protein FIN1 (291 aa).

Serine 54 carries the phosphoserine modification. Threonine 68 carries the post-translational modification Phosphothreonine. Residues serine 74 and serine 88 each carry the phosphoserine modification. Residues 254–284 (VELKEIKDLLLQMLRRQREIESRLSNIELQL) are a coiled coil.

As to quaternary structure, homooligomer; in vitro, FIN1 self-assembles into 10 nm diameter filaments. Interacts with the 14-3-3 proteins BMH1 and BMH2, and the protein phosphatase 1 complex catalytic subunit GLC7. In terms of processing, phosphorylated by CDC28. Phosphorylation is required for BMH1 and BMH2 interaction. Dephosphorylation by GLC7 depends on the presence of BMH1 and BMH2.

Its subcellular location is the nucleus. The protein localises to the cytoplasm. It is found in the cytoskeleton. The protein resides in the spindle pole. In terms of biological role, forms cell-cycle specific filaments between the spindle pole bodies of dividing yeast cells. The chain is Filament protein FIN1 (FIN1) from Saccharomyces cerevisiae (strain ATCC 204508 / S288c) (Baker's yeast).